The primary structure comprises 106 residues: MSLWISGIPIHYYLILAMIIFTIGVAGVMVRRSAVLIFMSVELILNSVNLVFVTFSKALYQVDGEVVVFFVMAIAAAEAAIGLAIVIAIHRIKKTSYVDEMNLMKW.

3 consecutive transmembrane segments (helical) span residues 10–30 (IHYY…GVMV), 35–55 (VLIF…FVTF), and 67–87 (VVFF…AIVI).

The protein belongs to the complex I subunit 4L family. As to quaternary structure, NDH-1 is composed of 14 different subunits. Subunits NuoA, H, J, K, L, M, N constitute the membrane sector of the complex.

It localises to the cell inner membrane. The enzyme catalyses a quinone + NADH + 5 H(+)(in) = a quinol + NAD(+) + 4 H(+)(out). NDH-1 shuttles electrons from NADH, via FMN and iron-sulfur (Fe-S) centers, to quinones in the respiratory chain. The immediate electron acceptor for the enzyme in this species is believed to be ubiquinone. Couples the redox reaction to proton translocation (for every two electrons transferred, four hydrogen ions are translocated across the cytoplasmic membrane), and thus conserves the redox energy in a proton gradient. The chain is NADH-quinone oxidoreductase subunit K from Leptospira borgpetersenii serovar Hardjo-bovis (strain JB197).